A 333-amino-acid polypeptide reads, in one-letter code: Prenyltransferase stbC (333 aa).

8 helical membrane-spanning segments follow: residues 74–94 (VAFQAVLYIGWTFFMRGAGCA), 125–145 (ANIFGFAMVALAFACISPLPA), 147–164 (CQRLGLMTTVLSIIYPFC), 173–193 (VILGMTLAINFILAAYGAGLP), 201–221 (VPTICVTTAITLLVVFYDVVY), 247–267 (ILLTSITLVIAGLIATTGVLV), 272–292 (YFFVFSVAGLLAALLAMIGGI), and 304–324 (SGWFYALAIFNLLGGYLIEYL).

It belongs to the UbiA prenyltransferase family.

It is found in the membrane. It carries out the reaction orsellinate + (2E,6E)-farnesyl diphosphate = ilicicolinate B + diphosphate. The protein operates within secondary metabolite biosynthesis; terpenoid biosynthesis. Its function is as follows. Prenyltransferase; part of the cluster that mediates the biosynthesis of LL-Z1272-beta, also known as ilicicolin B, a prenylated aryl-aldehyde produced by several fungi and that serves as a key pathway intermediate for many fungal meroterpenoids. The first step in the pathway is performed by the non-reducing polyketide synthase stbA that produces orsellinic acid by condensing acetyl-CoA with 3 malonyl-CoA units. The prenyltransferase stbC then prenylates orsenilic acid into grifolic acid. Finally, grifolic acid is reduced to ilicicolin B by the NRPS-like protein stbB. This is Prenyltransferase stbC from Stachybotrys bisbyi (Hyalostachybotrys bisbyi).